A 244-amino-acid polypeptide reads, in one-letter code: Cell division protein ZapD (244 aa).

This sequence belongs to the ZapD family. In terms of assembly, interacts with FtsZ.

The protein localises to the cytoplasm. Functionally, cell division factor that enhances FtsZ-ring assembly. Directly interacts with FtsZ and promotes bundling of FtsZ protofilaments, with a reduction in FtsZ GTPase activity. In Shewanella sp. (strain MR-4), this protein is Cell division protein ZapD.